Here is a 414-residue protein sequence, read N- to C-terminus: MSVLQKPRGVKDWYGEELIYFNWTVHQITNLAWKWGFSEVKTPLLEYAEAFKRTNANADIVKKELYEFHDKSNRLLALRPEATAGIVRLVCENKLLQPQNYPLRLFTIGTMYRYERPQSNRYREHYQFSCEVIGDTNPTVLLDTLLLGHAIIQQLGIEGVILKLNNLGNSATIQQWNQALQAYLTQFKAQLTELSQSRLSTNPLRILDDKVDGQLPFISDAPQIEQFLDAEQQALNTWLQQQLTQQQVPFEWNPTLVRGLDYYTGVVFEFVKDDTTVLAGGVYDNLVEELGGTPTKALGFACGIERSINCLSAVKKQAILANQPPRLLVIGLTEAALEKLLQLSLGWRAYHPVTIYPKVIRIINGIRAAQRLGYRFLGVIGGNNLEQQTITVKDLATEQQTTYTWDEFRQRQVL.

The protein belongs to the class-II aminoacyl-tRNA synthetase family. In terms of assembly, homodimer.

The protein resides in the cytoplasm. The enzyme catalyses tRNA(His) + L-histidine + ATP = L-histidyl-tRNA(His) + AMP + diphosphate + H(+). In Mycoplasma pneumoniae (strain ATCC 29342 / M129 / Subtype 1) (Mycoplasmoides pneumoniae), this protein is Histidine--tRNA ligase (hisS).